Reading from the N-terminus, the 289-residue chain is CCR4-associated factor 16 (289 aa).

The ABC transporter domain occupies 7 to 249 (IEVRNLTYKF…SEVVNAKVNG (243 aa)). 41-48 (GANGAGKS) serves as a coordination point for ATP.

It belongs to the ABC transporter superfamily. In terms of assembly, interacts with CCR4 and SSN2.

It is found in the cytoplasm. The protein resides in the nucleus. This is CCR4-associated factor 16 (CAF16) from Saccharomyces cerevisiae (strain ATCC 204508 / S288c) (Baker's yeast).